Reading from the N-terminus, the 361-residue chain is Phospho-N-acetylmuramoyl-pentapeptide-transferase (361 aa).

10 consecutive transmembrane segments (helical) span residues 25–45, 72–92, 95–115, 135–155, 169–189, 200–220, 240–260, 264–284, 289–309, and 338–358; these read TGGA…WIID, TPTM…LLWA, LNPY…VGFY, LLIE…LGRA, VMLN…VGAG, GLAI…SYLA, LAVL…FNAP, IFMG…IAVA, IVLA…IVQV, and QIVI…LSTL.

The protein belongs to the glycosyltransferase 4 family. MraY subfamily. The cofactor is Mg(2+).

The protein resides in the cell inner membrane. It carries out the reaction UDP-N-acetyl-alpha-D-muramoyl-L-alanyl-gamma-D-glutamyl-meso-2,6-diaminopimeloyl-D-alanyl-D-alanine + di-trans,octa-cis-undecaprenyl phosphate = di-trans,octa-cis-undecaprenyl diphospho-N-acetyl-alpha-D-muramoyl-L-alanyl-D-glutamyl-meso-2,6-diaminopimeloyl-D-alanyl-D-alanine + UMP. Its pathway is cell wall biogenesis; peptidoglycan biosynthesis. Its function is as follows. Catalyzes the initial step of the lipid cycle reactions in the biosynthesis of the cell wall peptidoglycan: transfers peptidoglycan precursor phospho-MurNAc-pentapeptide from UDP-MurNAc-pentapeptide onto the lipid carrier undecaprenyl phosphate, yielding undecaprenyl-pyrophosphoryl-MurNAc-pentapeptide, known as lipid I. This Rhodopseudomonas palustris (strain ATCC BAA-98 / CGA009) protein is Phospho-N-acetylmuramoyl-pentapeptide-transferase.